We begin with the raw amino-acid sequence, 172 residues long: Large ribosomal subunit protein eL20 (172 aa).

This sequence belongs to the eukaryotic ribosomal protein eL20 family. In terms of assembly, component of the large ribosomal subunit. Mature ribosomes consist of a small (40S) and a large (60S) subunit. The 40S subunit contains about 32 different proteins and 1 molecule of RNA (18S). The 60S subunit contains 45 different proteins and 3 molecules of RNA (25S, 5.8S and 5S).

The protein localises to the cytoplasm. In terms of biological role, component of the ribosome, a large ribonucleoprotein complex responsible for the synthesis of proteins in the cell. The small ribosomal subunit (SSU) binds messenger RNAs (mRNAs) and translates the encoded message by selecting cognate aminoacyl-transfer RNA (tRNA) molecules. The large subunit (LSU) contains the ribosomal catalytic site termed the peptidyl transferase center (PTC), which catalyzes the formation of peptide bonds, thereby polymerizing the amino acids delivered by tRNAs into a polypeptide chain. The nascent polypeptides leave the ribosome through a tunnel in the LSU and interact with protein factors that function in enzymatic processing, targeting, and the membrane insertion of nascent chains at the exit of the ribosomal tunnel. The sequence is that of Large ribosomal subunit protein eL20 from Candida albicans (strain SC5314 / ATCC MYA-2876) (Yeast).